Reading from the N-terminus, the 382-residue chain is Mannitol-1-phosphate 5-dehydrogenase (382 aa).

An NAD(+)-binding site is contributed by 3–14 (ALHFGAGNIGRG). K269 bears the N6-acetyllysine mark.

This sequence belongs to the mannitol dehydrogenase family.

The enzyme catalyses D-mannitol 1-phosphate + NAD(+) = beta-D-fructose 6-phosphate + NADH + H(+). The sequence is that of Mannitol-1-phosphate 5-dehydrogenase from Escherichia coli (strain ATCC 8739 / DSM 1576 / NBRC 3972 / NCIMB 8545 / WDCM 00012 / Crooks).